The sequence spans 258 residues: Alpha-hydroxynitrile lyase (258 aa).

Residues Ser-81 and His-236 each act as proton donor/acceptor in the active site.

This sequence belongs to the AB hydrolase superfamily. Hydroxynitrile lyase family. In terms of assembly, homodimer.

It catalyses the reaction (R)-mandelonitrile = benzaldehyde + hydrogen cyanide. In terms of biological role, involved in cyanogenesis, the release of HCN from injured tissues. Displays R-selective hydroxynitrile lyase activity. Also accepts nitromethane (MeNO2) as a donor in a reaction with aromatic aldehydes to yield (R)-beta-nitro alcohols. The protein is Alpha-hydroxynitrile lyase of Arabidopsis thaliana (Mouse-ear cress).